A 177-amino-acid chain; its full sequence is O-acetyl-ADP-ribose deacetylase (177 aa).

A Macro domain is found at Met-1–Gly-175. Residues Asp-11–Ile-12, Asn-25, Gly-33–Asp-35, and Ser-122–Tyr-126 each bind substrate. Asp-35 (proton acceptor) is an active-site residue.

The protein belongs to the MacroD-type family. YmdB subfamily. As to quaternary structure, homodimer. Interacts with RNase III.

It catalyses the reaction 3''-O-acetyl-ADP-D-ribose + H2O = ADP-D-ribose + acetate + H(+). The catalysed reaction is 2''-O-acetyl-ADP-D-ribose + H2O = ADP-D-ribose + acetate + H(+). Functionally, deacetylates O-acetyl-ADP ribose to yield ADP-ribose and free acetate. Down-regulates ribonuclease 3 (RNase III) activity. Acts by interacting directly with the region of the ribonuclease that is required for dimerization/activation. This is O-acetyl-ADP-ribose deacetylase from Escherichia coli O157:H7.